The chain runs to 137 residues: Probable 4-amino-4-deoxy-L-arabinose-phosphoundecaprenol flippase subunit ArnF (137 aa).

Residues 1 to 5 are Cytoplasmic-facing; the sequence is MNVPR. A helical transmembrane segment spans residues 6 to 26; it reads GWLAALGSVLLVSAAQLGMRW. Residues 27–44 are Periplasmic-facing; the sequence is GMSRLPLPEAWAGQTPEH. The helical transmembrane segment at 45–65 threads the bilayer; the sequence is AALLAVALAVAAYAASLLCWL. The Cytoplasmic portion of the chain corresponds to 66 to 76; that stretch reads AALRHLPLGRA. A helical transmembrane segment spans residues 77 to 97; that stretch reads YSLLSASYALVYLLAASLPAF. Residues 98–100 are Periplasmic-facing; it reads EET. Residues 101–121 form a helical membrane-spanning segment; sequence FTTGKTLGVGLVVLGVLTVNA. Topologically, residues 122-137 are cytoplasmic; it reads RRTAAAPAHHPSRKAL.

This sequence belongs to the ArnF family. In terms of assembly, heterodimer of ArnE and ArnF.

The protein resides in the cell inner membrane. It participates in bacterial outer membrane biogenesis; lipopolysaccharide biosynthesis. Its function is as follows. Translocates 4-amino-4-deoxy-L-arabinose-phosphoundecaprenol (alpha-L-Ara4N-phosphoundecaprenol) from the cytoplasmic to the periplasmic side of the inner membrane. The chain is Probable 4-amino-4-deoxy-L-arabinose-phosphoundecaprenol flippase subunit ArnF from Pseudomonas paraeruginosa (strain DSM 24068 / PA7) (Pseudomonas aeruginosa (strain PA7)).